Consider the following 94-residue polypeptide: Putative pterin-4-alpha-carbinolamine dehydratase (94 aa).

This sequence belongs to the pterin-4-alpha-carbinolamine dehydratase family.

The catalysed reaction is (4aS,6R)-4a-hydroxy-L-erythro-5,6,7,8-tetrahydrobiopterin = (6R)-L-erythro-6,7-dihydrobiopterin + H2O. This Mycobacterium leprae (strain Br4923) protein is Putative pterin-4-alpha-carbinolamine dehydratase.